Reading from the N-terminus, the 315-residue chain is Probable cell division protein WhiA (315 aa).

Residues 275–309 (NLKELGEMVPSGVVSKSGINHRLRKINEIADKIRE) constitute a DNA-binding region (H-T-H motif).

This sequence belongs to the WhiA family.

Involved in cell division and chromosome segregation. This Brevibacillus brevis (strain 47 / JCM 6285 / NBRC 100599) protein is Probable cell division protein WhiA.